Consider the following 329-residue polypeptide: MAFLKTLNPLLRRSPTPIPNPRSLLSLDAFLAASSPTAASHATAPAPFAAAAHHHVPIRSGGPLFLSSPPWMLSQSATPLTAAAAALRARLRRARALAGGGAQAVADAVGWEPRRISRDESEVAEAVTGGRERFLNLPNLVSIGRMASGPVIGWMIVNEWYLPAFGTLALSGASDWLDGFLARKMGINSVFGSYLDPLADKVLIGCVAIAMVEKDLLHPGLVGLVVVRDLLLVGGAVYKRASSLGWKWNSWSDFVNLDAIHREKVKPLFISKVNTVFQLMLVAAALLQPEFGTEETQNYITVLSWLVASTTIASTVGYGIKYRQIRPRR.

The transit peptide at 1-38 directs the protein to the chloroplast; the sequence is MAFLKTLNPLLRRSPTPIPNPRSLLSLDAFLAASSPTA. 4 helical membrane-spanning segments follow: residues 150–170, 190–210, 217–237, and 300–320; these read PVIGWMIVNEWYLPAFGTLAL, VFGSYLDPLADKVLIGCVAIA, LHPGLVGLVVVRDLLLVGGAV, and ITVLSWLVASTTIASTVGYGI.

It belongs to the CDP-alcohol phosphatidyltransferase class-I family. Mn(2+) is required as a cofactor.

The protein resides in the plastid. It is found in the chloroplast membrane. It carries out the reaction a CDP-1,2-diacyl-sn-glycerol + sn-glycerol 3-phosphate = a 1,2-diacyl-sn-glycero-3-phospho-(1'-sn-glycero-3'-phosphate) + CMP + H(+). The protein operates within phospholipid metabolism; phosphatidylglycerol biosynthesis; phosphatidylglycerol from CDP-diacylglycerol: step 1/2. Catalyzes the committed step to the synthesis of the acidic phospholipids. Transfers specifically a phosphatidyl group from CDP-diacylglycerol to glycerol-3-phosphate to form phosphatidylglycerophosphate. The polypeptide is CDP-diacylglycerol--glycerol-3-phosphate 3-phosphatidyltransferase 1, chloroplastic (Oryza sativa subsp. japonica (Rice)).